A 147-amino-acid polypeptide reads, in one-letter code: Hemoglobin subunit gamma (147 aa).

One can recognise a Globin domain in the interval 3-147 (HFTAEEKAAI…VANALAYKYH (145 aa)). Positions 64 and 93 each coordinate heme b.

This sequence belongs to the globin family. In terms of assembly, heterotetramer of two alpha chains and two gamma chains in fetal hemoglobin (Hb F). In terms of tissue distribution, red blood cells.

In terms of biological role, gamma chains make up the fetal hemoglobin F, in combination with alpha chains. In Loxodonta africana (African elephant), this protein is Hemoglobin subunit gamma (HBG).